A 364-amino-acid polypeptide reads, in one-letter code: DNA replication and repair protein RecF (364 aa).

Position 30 to 37 (30 to 37) interacts with ATP; the sequence is GNNAQGKT.

This sequence belongs to the RecF family.

The protein localises to the cytoplasm. In terms of biological role, the RecF protein is involved in DNA metabolism; it is required for DNA replication and normal SOS inducibility. RecF binds preferentially to single-stranded, linear DNA. It also seems to bind ATP. This is DNA replication and repair protein RecF from Clostridium botulinum (strain 657 / Type Ba4).